The sequence spans 137 residues: Acidic phospholipase A2 PL-II (137 aa).

The signal sequence occupies residues 1-17 (AVCVSLLGASSIRPLPL). 7 cysteine pairs are disulfide-bonded: cysteine 28/cysteine 89, cysteine 44/cysteine 136, cysteine 46/cysteine 62, cysteine 61/cysteine 117, cysteine 68/cysteine 110, cysteine 78/cysteine 103, and cysteine 96/cysteine 108. The Ca(2+) site is built by tyrosine 45, glycine 47, and glycine 49. Histidine 65 is an active-site residue. Position 66 (aspartate 66) interacts with Ca(2+). The active site involves aspartate 111.

Requires Ca(2+) as cofactor. Expressed by the venom gland.

The protein localises to the secreted. It carries out the reaction a 1,2-diacyl-sn-glycero-3-phosphocholine + H2O = a 1-acyl-sn-glycero-3-phosphocholine + a fatty acid + H(+). Snake venom phospholipase A2 (PLA2) that may act in the hemostasis system of the prey. Exhibits hydrolytic activities, and prefers the anionic micelles (dPPC with deoxycholate) (54 umol/mg/min) to the zwitterionic micelles (dPPC with Triton X-100) (15 umol/mg/min). PLA2 catalyzes the calcium-dependent hydrolysis of the 2-acyl groups in 3-sn-phosphoglycerides. This Walterinnesia aegyptia (Desert black snake) protein is Acidic phospholipase A2 PL-II.